Here is a 667-residue protein sequence, read N- to C-terminus: Mannosyl-oligosaccharide alpha-1,2-mannosidase IA (667 aa).

The Cytoplasmic segment spans residues 1-18 (MYRISPIGRKSNFHSREK). Residues 19–39 (CLIGLVLVTLCFLCFGGIFLL) traverse the membrane as a helical; Signal-anchor for type II membrane protein segment. Topologically, residues 40 to 667 (PDNFGSDRVL…PVTLPVSNAS (628 aa)) are lumenal. A disordered region spans residues 154–192 (GDNAASQASSHPQSSAQQHNQQQPQLPLGGGGNDQAPDT). Residues 156-178 (NAASQASSHPQSSAQQHNQQQPQ) are compositionally biased toward low complexity. Residue Asn278 is glycosylated (N-linked (GlcNAc...) asparagine). A disulfide bridge links Cys483 with Cys515. Residue Glu529 is the Proton donor of the active site. Residue Thr640 participates in Ca(2+) binding.

Belongs to the glycosyl hydrolase 47 family. The cofactor is Ca(2+). Requires Mg(2+) as cofactor. As to expression, complex spatial distribution during embryogenesis, including expression in lobula plate giant neurons. Also expressed in adult wing and eyes.

The protein resides in the golgi apparatus membrane. The catalysed reaction is N(4)-(alpha-D-Man-(1-&gt;2)-alpha-D-Man-(1-&gt;2)-alpha-D-Man-(1-&gt;3)-[alpha-D-Man-(1-&gt;2)-alpha-D-Man-(1-&gt;3)-[alpha-D-Man-(1-&gt;2)-alpha-D-Man-(1-&gt;6)]-alpha-D-Man-(1-&gt;6)]-beta-D-Man-(1-&gt;4)-beta-D-GlcNAc-(1-&gt;4)-beta-D-GlcNAc)-L-asparaginyl-[protein] (N-glucan mannose isomer 9A1,2,3B1,2,3) + 4 H2O = N(4)-(alpha-D-Man-(1-&gt;3)-[alpha-D-Man-(1-&gt;3)-[alpha-D-Man-(1-&gt;6)]-alpha-D-Man-(1-&gt;6)]-beta-D-Man-(1-&gt;4)-beta-D-GlcNAc-(1-&gt;4)-beta-D-GlcNAc)-L-asparaginyl-[protein] (N-glucan mannose isomer 5A1,2) + 4 beta-D-mannose. It carries out the reaction N(4)-(alpha-D-Man-(1-&gt;2)-alpha-D-Man-(1-&gt;2)-alpha-D-Man-(1-&gt;3)-[alpha-D-Man-(1-&gt;3)-[alpha-D-Man-(1-&gt;2)-alpha-D-Man-(1-&gt;6)]-alpha-D-Man-(1-&gt;6)]-beta-D-Man-(1-&gt;4)-beta-D-GlcNAc-(1-&gt;4)-beta-D-GlcNAc)-L-asparaginyl-[protein] (N-glucan mannose isomer 8A1,2,3B1,3) + 3 H2O = N(4)-(alpha-D-Man-(1-&gt;3)-[alpha-D-Man-(1-&gt;3)-[alpha-D-Man-(1-&gt;6)]-alpha-D-Man-(1-&gt;6)]-beta-D-Man-(1-&gt;4)-beta-D-GlcNAc-(1-&gt;4)-beta-D-GlcNAc)-L-asparaginyl-[protein] (N-glucan mannose isomer 5A1,2) + 3 beta-D-mannose. It participates in protein modification; protein glycosylation. In terms of biological role, involved in the maturation of Asn-linked oligosaccharides. Progressively trim alpha-1,2-linked mannose residues from Man(9)GlcNAc(2) to produce Man(5)GlcNAc(2). This is Mannosyl-oligosaccharide alpha-1,2-mannosidase IA from Drosophila melanogaster (Fruit fly).